A 487-amino-acid chain; its full sequence is Probable cytochrome P450 313a5 (487 aa).

Position 223 is a phosphotyrosine (Y223). C433 provides a ligand contact to heme.

Belongs to the cytochrome P450 family. It depends on heme as a cofactor.

It is found in the endoplasmic reticulum membrane. Its subcellular location is the microsome membrane. May be involved in the metabolism of insect hormones and in the breakdown of synthetic insecticides. The protein is Probable cytochrome P450 313a5 (Cyp313a5) of Drosophila melanogaster (Fruit fly).